An 811-amino-acid chain; its full sequence is DNA gyrase subunit A (811 aa).

In terms of domain architecture, Topo IIA-type catalytic spans 30-493 (LPDVRDGLKP…LEEDIGKEDL (464 aa)). Tyrosine 118 acts as the O-(5'-phospho-DNA)-tyrosine intermediate in catalysis. Positions 520-526 (QGRGGRG) match the GyrA-box motif.

It belongs to the type II topoisomerase GyrA/ParC subunit family. In terms of assembly, heterotetramer, composed of two GyrA and two GyrB chains. In the heterotetramer, GyrA contains the active site tyrosine that forms a transient covalent intermediate with DNA, while GyrB binds cofactors and catalyzes ATP hydrolysis.

The protein localises to the cytoplasm. The enzyme catalyses ATP-dependent breakage, passage and rejoining of double-stranded DNA.. A type II topoisomerase that negatively supercoils closed circular double-stranded (ds) DNA in an ATP-dependent manner to modulate DNA topology and maintain chromosomes in an underwound state. Negative supercoiling favors strand separation, and DNA replication, transcription, recombination and repair, all of which involve strand separation. Also able to catalyze the interconversion of other topological isomers of dsDNA rings, including catenanes and knotted rings. Type II topoisomerases break and join 2 DNA strands simultaneously in an ATP-dependent manner. The protein is DNA gyrase subunit A of Deinococcus deserti (strain DSM 17065 / CIP 109153 / LMG 22923 / VCD115).